We begin with the raw amino-acid sequence, 679 residues long: Glycine--tRNA ligase beta subunit (679 aa).

This sequence belongs to the class-II aminoacyl-tRNA synthetase family. As to quaternary structure, tetramer of two alpha and two beta subunits.

It is found in the cytoplasm. The catalysed reaction is tRNA(Gly) + glycine + ATP = glycyl-tRNA(Gly) + AMP + diphosphate. The protein is Glycine--tRNA ligase beta subunit of Streptococcus agalactiae serotype V (strain ATCC BAA-611 / 2603 V/R).